We begin with the raw amino-acid sequence, 176 residues long: Inner membrane protein p54 (176 aa).

A helical membrane pass occupies residues 32 to 52 (YTILIAIVVLIIIIIVLIYLF). A disordered region spans residues 82 to 176 (VTPQPGIAKP…YTHKDLENSL (95 aa)). A compositionally biased stretch (low complexity) spans 123–154 (GMAAGGPAAASAPAHPAELYTTATTQNTASQT). The interval 142-154 (YTTATTQNTASQT) is interaction with host DYNLL1.

Belongs to the asfivirus envelope protein p54 family. Interacts with the host light chain cytoplasmic dynein DYNLL1; this interaction is critical for intracellular microtubule-dependent virus transport toward viral factories.

It is found in the virion membrane. It localises to the host cytoplasm. Its subcellular location is the host cytoskeleton. The protein localises to the host endoplasmic reticulum membrane. Inner envelope protein involved, through its interaction with host dynein, in the intracellular microtubule-dependent transport of viral capsid toward viral factories. Seems to induce caspase-3 activation and apoptosis. Plays a role in virion morphogenesis by recruiting and transforming the host ER membranes into the precursors of the viral envelope. Involved in virus attachment to the host cell. This African swine fever virus (isolate Tick/Malawi/Lil 20-1/1983) (ASFV) protein is Inner membrane protein p54.